The following is a 323-amino-acid chain: Cell division protein ZipA (323 aa).

Residues 1 to 5 (MQELR) lie on the Periplasmic side of the membrane. A helical membrane pass occupies residues 6-26 (FVLIVVGALAIAALLFHGLWT). Over 27–323 (SKKEGKAKFG…QIVEFNAANA (297 aa)) the chain is Cytoplasmic. Positions 35 to 92 (FGNKPLGKLDVDQEDKDTPGQERDFAPDPEDDFEIIRKDRKEPDFGMENSFDNKFSSD) are disordered. Basic and acidic residues-rich tracts occupy residues 41–60 (GKLD…RDFA) and 68–78 (EIIRKDRKEPD).

The protein belongs to the ZipA family. Interacts with FtsZ via their C-terminal domains.

The protein resides in the cell inner membrane. In terms of biological role, essential cell division protein that stabilizes the FtsZ protofilaments by cross-linking them and that serves as a cytoplasmic membrane anchor for the Z ring. Also required for the recruitment to the septal ring of downstream cell division proteins. The chain is Cell division protein ZipA from Vibrio campbellii (strain ATCC BAA-1116).